We begin with the raw amino-acid sequence, 261 residues long: Indole-3-glycerol phosphate synthase (261 aa).

This sequence belongs to the TrpC family.

It catalyses the reaction 1-(2-carboxyphenylamino)-1-deoxy-D-ribulose 5-phosphate + H(+) = (1S,2R)-1-C-(indol-3-yl)glycerol 3-phosphate + CO2 + H2O. It participates in amino-acid biosynthesis; L-tryptophan biosynthesis; L-tryptophan from chorismate: step 4/5. The polypeptide is Indole-3-glycerol phosphate synthase (Burkholderia cenocepacia (strain HI2424)).